The chain runs to 27 residues: Natriuretic peptides A (27 aa).

Cys7 and Cys23 form a disulfide bridge.

The protein belongs to the natriuretic peptide family.

The protein localises to the secreted. In terms of biological role, hormone playing a key role in cardiovascular homeostasis through regulation of natriuresis, diuresis, and vasodilation. Has a cGMP-stimulating activity. This is Natriuretic peptides A (nppa) from Anguilla japonica (Japanese eel).